Consider the following 295-residue polypeptide: Acetylglutamate kinase (295 aa).

Residues 67 to 68 (GG), Arg89, and Asn191 each bind substrate.

This sequence belongs to the acetylglutamate kinase family. ArgB subfamily.

The protein resides in the cytoplasm. The enzyme catalyses N-acetyl-L-glutamate + ATP = N-acetyl-L-glutamyl 5-phosphate + ADP. Its pathway is amino-acid biosynthesis; L-arginine biosynthesis; N(2)-acetyl-L-ornithine from L-glutamate: step 2/4. In terms of biological role, catalyzes the ATP-dependent phosphorylation of N-acetyl-L-glutamate. This chain is Acetylglutamate kinase, found in Nitrosomonas eutropha (strain DSM 101675 / C91 / Nm57).